A 692-amino-acid polypeptide reads, in one-letter code: Protein artemis (692 aa).

Phosphothreonine is present on Thr-380. A Phosphoserine modification is found at Ser-385. Disordered stretches follow at residues 504–555 (LENF…DSQS) and 640–664 (STNADSQSSSDFEVPSTPEAELPKR). The span at 506–520 (NFPSSTVAGGSQSPK) shows a compositional bias: polar residues. The segment covering 530–543 (THISSQNSSQSTHI) has biased composition (low complexity). Polar residues-rich tracts occupy residues 544-555 (TEQGSQGWDSQS) and 640-650 (STNADSQSSSD). Residue Ser-645 is modified to Phosphoserine; by ATM.

The protein belongs to the DNA repair metallo-beta-lactamase (DRMBL) family. As to quaternary structure, interacts with LIG4; the interaction is direct. Interacts with ATM. Interacts with BRCA1. Interacts with PRKDC. Interacts with TP53BP1. Also exhibits ATM- and phosphorylation-dependent interaction with the MRN complex, composed of MRE11, RAD50, and NBN. In terms of processing, phosphorylation on undefined residues by PRKDC may stimulate endonucleolytic activity on 5' and 3' hairpins and overhangs. PRKDC must remain present, even after phosphorylation, for efficient hairpin opening. Also phosphorylated by ATM in response to ionizing radiation (IR) and by ATR in response to ultraviolet (UV) radiation. In terms of tissue distribution, ubiquitously expressed, with highest levels in the kidney, lung, pancreas and placenta (at the mRNA level). Expression is not increased in thymus or bone marrow, sites of V(D)J recombination.

It is found in the nucleus. Its function is as follows. Nuclease involved in DNA non-homologous end joining (NHEJ); required for double-strand break repair and V(D)J recombination. Required for V(D)J recombination, the process by which exons encoding the antigen-binding domains of immunoglobulins and T-cell receptor proteins are assembled from individual V, (D), and J gene segments. V(D)J recombination is initiated by the lymphoid specific RAG endonuclease complex, which generates site specific DNA double strand breaks (DSBs). These DSBs present two types of DNA end structures: hairpin sealed coding ends and phosphorylated blunt signal ends. These ends are independently repaired by the non homologous end joining (NHEJ) pathway to form coding and signal joints respectively. This protein exhibits single-strand specific 5'-3' exonuclease activity in isolation and acquires endonucleolytic activity on 5' and 3' hairpins and overhangs when in a complex with PRKDC. The latter activity is required specifically for the resolution of closed hairpins prior to the formation of the coding joint. Also required for the repair of complex DSBs induced by ionizing radiation, which require substantial end-processing prior to religation by NHEJ. The polypeptide is Protein artemis (Homo sapiens (Human)).